The sequence spans 752 residues: Photosystem I P700 chlorophyll a apoprotein A1 (752 aa).

Transmembrane regions (helical) follow at residues Ile73 to Ala96, Leu159 to His182, Met198 to Leu222, Thr294 to Tyr312, Trp349 to Tyr372, Leu388 to Val414, Ala436 to His458, and Phe533 to Leu551. The [4Fe-4S] cluster site is built by Cys575 and Cys584. Transmembrane regions (helical) follow at residues His591–Trp612 and Leu666–Phe688. His677 contributes to the chlorophyll a' binding site. Met685 and Tyr693 together coordinate chlorophyll a. Residue Trp694 coordinates phylloquinone. Residues Ala726–Ala746 traverse the membrane as a helical segment.

Belongs to the PsaA/PsaB family. In terms of assembly, the PsaA/B heterodimer binds the P700 chlorophyll special pair and subsequent electron acceptors. PSI consists of a core antenna complex that captures photons, and an electron transfer chain that converts photonic excitation into a charge separation. The eukaryotic PSI reaction center is composed of at least 11 subunits. Requires P700 is a chlorophyll a/chlorophyll a' dimer, A0 is one or more chlorophyll a, A1 is one or both phylloquinones and FX is a shared 4Fe-4S iron-sulfur center. as cofactor.

It is found in the plastid. Its subcellular location is the chloroplast thylakoid membrane. The enzyme catalyses reduced [plastocyanin] + hnu + oxidized [2Fe-2S]-[ferredoxin] = oxidized [plastocyanin] + reduced [2Fe-2S]-[ferredoxin]. PsaA and PsaB bind P700, the primary electron donor of photosystem I (PSI), as well as the electron acceptors A0, A1 and FX. PSI is a plastocyanin/cytochrome c6-ferredoxin oxidoreductase, converting photonic excitation into a charge separation, which transfers an electron from the donor P700 chlorophyll pair to the spectroscopically characterized acceptors A0, A1, FX, FA and FB in turn. Oxidized P700 is reduced on the lumenal side of the thylakoid membrane by plastocyanin or cytochrome c6. The chain is Photosystem I P700 chlorophyll a apoprotein A1 from Emiliania huxleyi (Coccolithophore).